The sequence spans 259 residues: Zinc import ATP-binding protein ZnuC (259 aa).

The 218-residue stretch at 6-223 (VTVQSVSVTL…PAYHELFGPG (218 aa)) folds into the ABC transporter domain. 38–45 (GPNGAGKS) provides a ligand contact to ATP. A disordered region spans residues 230-259 (ALYTHDHDHDHDLHGNATHSHDHNGPCNHD). The span at 233-259 (THDHDHDHDLHGNATHSHDHNGPCNHD) shows a compositional bias: basic and acidic residues.

The protein belongs to the ABC transporter superfamily. Zinc importer (TC 3.A.1.15.5) family. As to quaternary structure, the complex is composed of two ATP-binding proteins (ZnuC), two transmembrane proteins (ZnuB) and a solute-binding protein (ZnuA).

It localises to the cell inner membrane. It catalyses the reaction Zn(2+)(out) + ATP(in) + H2O(in) = Zn(2+)(in) + ADP(in) + phosphate(in) + H(+)(in). Its function is as follows. Part of the ABC transporter complex ZnuABC involved in zinc import. Responsible for energy coupling to the transport system. The sequence is that of Zinc import ATP-binding protein ZnuC from Alcanivorax borkumensis (strain ATCC 700651 / DSM 11573 / NCIMB 13689 / SK2).